The sequence spans 308 residues: Ribosomal RNA small subunit methyltransferase H (308 aa).

Residues 36–38 (GGH), Asp55, Phe86, Asp103, and Gln110 contribute to the S-adenosyl-L-methionine site.

This sequence belongs to the methyltransferase superfamily. RsmH family.

Its subcellular location is the cytoplasm. The enzyme catalyses cytidine(1402) in 16S rRNA + S-adenosyl-L-methionine = N(4)-methylcytidine(1402) in 16S rRNA + S-adenosyl-L-homocysteine + H(+). Functionally, specifically methylates the N4 position of cytidine in position 1402 (C1402) of 16S rRNA. In Helicobacter pylori (strain G27), this protein is Ribosomal RNA small subunit methyltransferase H.